The following is a 312-amino-acid chain: 26S proteasome non-ATPase regulatory subunit 14 (312 aa).

Residues 33-168 enclose the MPN domain; that stretch reads VYISSLALLK…IDAFRTINPQ (136 aa). Positions 115, 117, and 128 each coordinate Zn(2+). The JAMM motif signature appears at 115–128; sequence HSHPGFGCWLSGVD.

This sequence belongs to the peptidase M67A family. PSMD14 subfamily. Component of the 19S regulatory cap of the 26S proteasome.

Functionally, metalloprotease component of the 26S proteasome that specifically cleaves 'Lys-63'-linked polyubiquitin chains. The 26S proteasome is involved in the ATP-dependent degradation of ubiquitinated proteins. The function of the 'Lys-63'-specific deubiquitination of the proteasome is unclear. This is 26S proteasome non-ATPase regulatory subunit 14 (rpn-11) from Caenorhabditis elegans.